Reading from the N-terminus, the 475-residue chain is Aspartyl/glutamyl-tRNA(Asn/Gln) amidotransferase subunit B (475 aa).

This sequence belongs to the GatB/GatE family. GatB subfamily. Heterotrimer of A, B and C subunits.

It carries out the reaction L-glutamyl-tRNA(Gln) + L-glutamine + ATP + H2O = L-glutaminyl-tRNA(Gln) + L-glutamate + ADP + phosphate + H(+). It catalyses the reaction L-aspartyl-tRNA(Asn) + L-glutamine + ATP + H2O = L-asparaginyl-tRNA(Asn) + L-glutamate + ADP + phosphate + 2 H(+). Its function is as follows. Allows the formation of correctly charged Asn-tRNA(Asn) or Gln-tRNA(Gln) through the transamidation of misacylated Asp-tRNA(Asn) or Glu-tRNA(Gln) in organisms which lack either or both of asparaginyl-tRNA or glutaminyl-tRNA synthetases. The reaction takes place in the presence of glutamine and ATP through an activated phospho-Asp-tRNA(Asn) or phospho-Glu-tRNA(Gln). The sequence is that of Aspartyl/glutamyl-tRNA(Asn/Gln) amidotransferase subunit B from Chlorobium phaeobacteroides (strain BS1).